The chain runs to 156 residues: 6,7-dimethyl-8-ribityllumazine synthase (156 aa).

5-amino-6-(D-ribitylamino)uracil is bound by residues F25, 59 to 61 (AFE), and 83 to 85 (AVI). 88 to 89 (AT) is a (2S)-2-hydroxy-3-oxobutyl phosphate binding site. H91 acts as the Proton donor in catalysis. F116 is a binding site for 5-amino-6-(D-ribitylamino)uracil. R130 is a binding site for (2S)-2-hydroxy-3-oxobutyl phosphate.

This sequence belongs to the DMRL synthase family.

It carries out the reaction (2S)-2-hydroxy-3-oxobutyl phosphate + 5-amino-6-(D-ribitylamino)uracil = 6,7-dimethyl-8-(1-D-ribityl)lumazine + phosphate + 2 H2O + H(+). It participates in cofactor biosynthesis; riboflavin biosynthesis; riboflavin from 2-hydroxy-3-oxobutyl phosphate and 5-amino-6-(D-ribitylamino)uracil: step 1/2. Catalyzes the formation of 6,7-dimethyl-8-ribityllumazine by condensation of 5-amino-6-(D-ribitylamino)uracil with 3,4-dihydroxy-2-butanone 4-phosphate. This is the penultimate step in the biosynthesis of riboflavin. The polypeptide is 6,7-dimethyl-8-ribityllumazine synthase (Nitratidesulfovibrio vulgaris (strain ATCC 29579 / DSM 644 / CCUG 34227 / NCIMB 8303 / VKM B-1760 / Hildenborough) (Desulfovibrio vulgaris)).